We begin with the raw amino-acid sequence, 68 residues long: uncharacterized protein (68 aa).

This is an uncharacterized protein from Orgyia pseudotsugata (Douglas-fir tussock moth).